The primary structure comprises 331 residues: Probable allantoicase (331 aa).

This sequence belongs to the allantoicase family.

The enzyme catalyses allantoate + H2O = (S)-ureidoglycolate + urea. It functions in the pathway nitrogen metabolism; (S)-allantoin degradation; (S)-ureidoglycolate from allantoate (aminidohydrolase route): step 1/1. In Pseudomonas fluorescens (strain ATCC BAA-477 / NRRL B-23932 / Pf-5), this protein is Probable allantoicase.